Consider the following 139-residue polypeptide: Putative pre-16S rRNA nuclease (139 aa).

This sequence belongs to the YqgF nuclease family.

The protein resides in the cytoplasm. Could be a nuclease involved in processing of the 5'-end of pre-16S rRNA. The protein is Putative pre-16S rRNA nuclease of Phocaeicola vulgatus (strain ATCC 8482 / DSM 1447 / JCM 5826 / CCUG 4940 / NBRC 14291 / NCTC 11154) (Bacteroides vulgatus).